The sequence spans 273 residues: Formamidopyrimidine-DNA glycosylase (273 aa).

Catalysis depends on proline 2, which acts as the Schiff-base intermediate with DNA. The active-site Proton donor is the glutamate 3. The active-site Proton donor; for beta-elimination activity is the lysine 58. Positions 91, 110, and 153 each coordinate DNA. Residues 238–272 (KVYGKEGQPCPRCGEDFVKIKISGRGTTYCLHCQK) form an FPG-type zinc finger. The active-site Proton donor; for delta-elimination activity is the arginine 262.

This sequence belongs to the FPG family. In terms of assembly, monomer. Zn(2+) is required as a cofactor.

The catalysed reaction is Hydrolysis of DNA containing ring-opened 7-methylguanine residues, releasing 2,6-diamino-4-hydroxy-5-(N-methyl)formamidopyrimidine.. It catalyses the reaction 2'-deoxyribonucleotide-(2'-deoxyribose 5'-phosphate)-2'-deoxyribonucleotide-DNA = a 3'-end 2'-deoxyribonucleotide-(2,3-dehydro-2,3-deoxyribose 5'-phosphate)-DNA + a 5'-end 5'-phospho-2'-deoxyribonucleoside-DNA + H(+). Involved in base excision repair of DNA damaged by oxidation or by mutagenic agents. Acts as a DNA glycosylase that recognizes and removes damaged bases. Has a preference for oxidized purines, such as 7,8-dihydro-8-oxoguanine (8-oxoG). Has AP (apurinic/apyrimidinic) lyase activity and introduces nicks in the DNA strand. Cleaves the DNA backbone by beta-delta elimination to generate a single-strand break at the site of the removed base with both 3'- and 5'-phosphates. This chain is Formamidopyrimidine-DNA glycosylase, found in Lactobacillus delbrueckii subsp. bulgaricus (strain ATCC 11842 / DSM 20081 / BCRC 10696 / JCM 1002 / NBRC 13953 / NCIMB 11778 / NCTC 12712 / WDCM 00102 / Lb 14).